The chain runs to 264 residues: Indole-3-glycerol phosphate synthase (264 aa).

The protein belongs to the TrpC family.

The catalysed reaction is 1-(2-carboxyphenylamino)-1-deoxy-D-ribulose 5-phosphate + H(+) = (1S,2R)-1-C-(indol-3-yl)glycerol 3-phosphate + CO2 + H2O. Its pathway is amino-acid biosynthesis; L-tryptophan biosynthesis; L-tryptophan from chorismate: step 4/5. The chain is Indole-3-glycerol phosphate synthase from Stenotrophomonas maltophilia (strain K279a).